The sequence spans 186 residues: Interferon beta (186 aa).

The signal sequence occupies residues 1 to 21 (MTYRWILPMALLLCFSTTALS). At Tyr24 the chain carries Phosphotyrosine. Cys52 and Cys161 are disulfide-bonded. Asn101 and Asn136 each carry an N-linked (GlcNAc...) asparagine glycan.

Belongs to the alpha/beta interferon family. As to quaternary structure, monomer.

It is found in the secreted. In terms of biological role, type I interferon cytokine that plays a key role in the innate immune response to infection, developing tumors and other inflammatory stimuli. Signals via binding to high-affinity (IFNAR2) and low-affinity (IFNAR1) heterodimeric receptor, activating the canonical Jak-STAT signaling pathway resulting in transcriptional activation or repression of interferon-regulated genes that encode the effectors of the interferon response, such as antiviral proteins, regulators of cell proliferation and differentiation, and immunoregulatory proteins. Signals mostly via binding to a IFNAR1-IFNAR2 heterodimeric receptor, but can also function with IFNAR1 alone and independently of Jak-STAT pathways. Elicits a wide variety of responses, including antiviral and antibacterial activities, and can regulate the development of B-cells, myelopoiesis and lipopolysaccharide (LPS)-inducible production of tumor necrosis factor. Plays a role in neuronal homeostasis by regulating dopamine turnover and protecting dopaminergic neurons: acts by promoting neuronal autophagy and alpha-synuclein clearance, thereby preventing dopaminergic neuron loss. IFNB1 is more potent than interferon-alpha (IFN-alpha) in inducing the apoptotic and antiproliferative pathways required for control of tumor cell growth. This Equus caballus (Horse) protein is Interferon beta (IFNB1).